The primary structure comprises 469 residues: Ribulose bisphosphate carboxylase large chain (469 aa).

Substrate is bound by residues Asn115 and Thr165. Lys167 acts as the Proton acceptor in catalysis. Lys169 is a binding site for substrate. Lys193, Asp195, and Glu196 together coordinate Mg(2+). Residue Lys193 is modified to N6-carboxylysine. His286 functions as the Proton acceptor in the catalytic mechanism. Arg287, His319, and Ser371 together coordinate substrate.

The protein belongs to the RuBisCO large chain family. Type I subfamily. In terms of assembly, heterohexadecamer of 8 large chains and 8 small chains. Mg(2+) is required as a cofactor.

The protein resides in the plastid. The protein localises to the organellar chromatophore. The catalysed reaction is 2 (2R)-3-phosphoglycerate + 2 H(+) = D-ribulose 1,5-bisphosphate + CO2 + H2O. It catalyses the reaction D-ribulose 1,5-bisphosphate + O2 = 2-phosphoglycolate + (2R)-3-phosphoglycerate + 2 H(+). In terms of biological role, ruBisCO catalyzes two reactions: the carboxylation of D-ribulose 1,5-bisphosphate, the primary event in carbon dioxide fixation, as well as the oxidative fragmentation of the pentose substrate. Both reactions occur simultaneously and in competition at the same active site. In Paulinella chromatophora, this protein is Ribulose bisphosphate carboxylase large chain.